The following is a 375-amino-acid chain: Protein RecA (375 aa).

ATP is bound at residue 88 to 95 (GPESSGKT).

This sequence belongs to the RecA family.

It localises to the cytoplasm. In terms of biological role, can catalyze the hydrolysis of ATP in the presence of single-stranded DNA, the ATP-dependent uptake of single-stranded DNA by duplex DNA, and the ATP-dependent hybridization of homologous single-stranded DNAs. It interacts with LexA causing its activation and leading to its autocatalytic cleavage. This Rhodopirellula baltica (strain DSM 10527 / NCIMB 13988 / SH1) protein is Protein RecA.